The chain runs to 1067 residues: Kinesin-like protein KIF11-B (1067 aa).

The region spanning 18–359 (NIQVVVRCRP…LDYANRAKSI (342 aa)) is the Kinesin motor domain. 105–112 (GQTGTGKT) lines the ATP pocket. A coiled-coil region spans residues 365–480 (VNQKLTKKAL…SKEQLAQESF (116 aa)). Residue threonine 937 is modified to Phosphothreonine; by CDK1. The residue at position 1046 (serine 1046) is a Phosphoserine; by NEK6.

This sequence belongs to the TRAFAC class myosin-kinesin ATPase superfamily. Kinesin family. BimC subfamily. In terms of assembly, heterotetramer of two heavy and two light chains. Interacts with aurka. In terms of processing, phosphorylation of Thr-937 during mitosis controls the association of this protein with the spindle apparatus. A subset of this protein primarily localized at the spindle pole is phosphorylated by NEK6 during mitosis. Post-translationally, phosphorylated on a serine residue by aurka. In unfertilized eggs, shows highest expression in the germinal vesicle and radial yolk-poor channels. Also present in testis.

Its subcellular location is the cytoplasm. The protein resides in the cytoskeleton. The protein localises to the spindle pole. Plus end-directed motor protein required for establishing a bipolar spindle. Associates with both interphase and spindle microtubules. May be involved in nuclear divisions taking place during the development of unfertilized eggs. Required in non-mitotic cells for transport of secretory proteins from the Golgi complex to the cell surface. This is Kinesin-like protein KIF11-B (kif11-b) from Xenopus laevis (African clawed frog).